Consider the following 122-residue polypeptide: Large ribosomal subunit protein bL19 (122 aa).

This sequence belongs to the bacterial ribosomal protein bL19 family.

Functionally, this protein is located at the 30S-50S ribosomal subunit interface and may play a role in the structure and function of the aminoacyl-tRNA binding site. In Chlamydia abortus (strain DSM 27085 / S26/3) (Chlamydophila abortus), this protein is Large ribosomal subunit protein bL19.